The sequence spans 409 residues: Multifunctional CCA protein (409 aa).

ATP-binding residues include Gly8 and Arg11. Residues Gly8 and Arg11 each coordinate CTP. 2 residues coordinate Mg(2+): Asp21 and Asp23. ATP contacts are provided by Arg91, Arg137, and Arg140. CTP is bound by residues Arg91, Arg137, and Arg140. An HD domain is found at 228–329 (TGAHTLSVLL…LELLQSFDVF (102 aa)).

It belongs to the tRNA nucleotidyltransferase/poly(A) polymerase family. Bacterial CCA-adding enzyme type 1 subfamily. In terms of assembly, monomer. Can also form homodimers and oligomers. Mg(2+) is required as a cofactor. Requires Ni(2+) as cofactor.

It carries out the reaction a tRNA precursor + 2 CTP + ATP = a tRNA with a 3' CCA end + 3 diphosphate. The enzyme catalyses a tRNA with a 3' CCA end + 2 CTP + ATP = a tRNA with a 3' CCACCA end + 3 diphosphate. In terms of biological role, catalyzes the addition and repair of the essential 3'-terminal CCA sequence in tRNAs without using a nucleic acid template. Adds these three nucleotides in the order of C, C, and A to the tRNA nucleotide-73, using CTP and ATP as substrates and producing inorganic pyrophosphate. tRNA 3'-terminal CCA addition is required both for tRNA processing and repair. Also involved in tRNA surveillance by mediating tandem CCA addition to generate a CCACCA at the 3' terminus of unstable tRNAs. While stable tRNAs receive only 3'-terminal CCA, unstable tRNAs are marked with CCACCA and rapidly degraded. The sequence is that of Multifunctional CCA protein from Pseudomonas fluorescens (strain ATCC BAA-477 / NRRL B-23932 / Pf-5).